A 307-amino-acid polypeptide reads, in one-letter code: Mitochondrial brown fat uncoupling protein 1 (307 aa).

Over 1 to 10 (MVSQTTSEVQ) the chain is Mitochondrial intermembrane. A helical membrane pass occupies residues 11 to 32 (PTMGVKIFSAGVAACLADIITF). Solcar repeat units lie at residues 11–102 (PTMG…VQEY), 111–201 (PTLV…MKGA), and 210–295 (DDVP…LKKE). The Mitochondrial matrix portion of the chain corresponds to 33 to 73 (PLDTAKVRLQIQGEGQTSSTIRYKGVLGTITTLAKTEGLPK). K56 contacts fatty acid 16:0. Residues 74–96 (LYSGLPAGIQRQISFASLRIGLY) traverse the membrane as a helical segment. At 97-116 (DTVQEYFSSGKETPPTLVNR) the chain is on the mitochondrial intermembrane side. A helical membrane pass occupies residues 117–133 (ISAGLMTGGVAVFIGQP). Over 134–178 (TEVVKVRLQAQSHLHGIKPRYTGTYNAYRIIATTESLSTLWKGTT) the chain is Mitochondrial matrix. Residues 179–195 (PNLLRNVIINCTELVTY) traverse the membrane as a helical segment. At 196 to 212 (DLMKGALVNNQILADDV) the chain is on the mitochondrial intermembrane side. A helical membrane pass occupies residues 213 to 232 (PCHLLSALVAGFCTTFLASP). At 233–266 (ADVVKTRFINSLPGQYPSVPSCAMTMFTKEGPTA) the chain is on the mitochondrial matrix side. Position 254 is a cysteine sulfenic acid (-SOH) (C254). Residues 267-289 (FFKGFVPSFLRLASWNVIMFVCF) traverse the membrane as a helical segment. K269 contributes to the fatty acid 16:0 binding site. Residues 290 to 307 (EQLKKELMKSRQTVDCTT) lie on the Mitochondrial intermembrane side of the membrane.

The protein belongs to the mitochondrial carrier (TC 2.A.29) family. Most probably functions as a monomer. Binds one purine nucleotide per monomer. However, has also been suggested to function as a homodimer or a homotetramer. Tightly associates with cardiolipin in the mitochondrion inner membrane; may stabilize and regulate its activity. Post-translationally, may undergo sulfenylation upon cold exposure. May increase the sensitivity of UCP1 thermogenic function to the activation by noradrenaline probably through structural effects. May undergo ubiquitin-mediated proteasomal degradation. In terms of tissue distribution, brown adipose tissue.

The protein localises to the mitochondrion inner membrane. It carries out the reaction H(+)(in) = H(+)(out). Its activity is regulated as follows. Has no constitutive proton transporter activity and has to be activated by long-chain fatty acids/LCFAs. Inhibited by purine nucleotides. Both purine nucleotides and LCFAs bind the cytosolic side of the transporter and directly compete to activate or inhibit it. Activated by noradrenaline and reactive oxygen species. Despite lacking canonical translational encoding for selenocysteine, a small pool of the protein has been observed to selectively incorporate selenocysteine at 'Cys-254'. Selenocysteine-modified protein is highly sensitive to redox modification and may constitute a pool of protein highly sensitive to activation by elevated levels of reactive oxygen species (ROS). Functionally, mitochondrial protein responsible for thermogenic respiration, a specialized capacity of brown adipose tissue and beige fat that participates in non-shivering adaptive thermogenesis to temperature and diet variations and more generally to the regulation of energy balance. Functions as a long-chain fatty acid/LCFA and proton symporter, simultaneously transporting one LCFA and one proton through the inner mitochondrial membrane. However, LCFAs remaining associated with the transporter via their hydrophobic tails, it results in an apparent transport of protons activated by LCFAs. Thereby, dissipates the mitochondrial proton gradient and converts the energy of substrate oxydation into heat instead of ATP. Regulates the production of reactive oxygen species/ROS by mitochondria. The polypeptide is Mitochondrial brown fat uncoupling protein 1 (Phodopus sungorus (Striped hairy-footed hamster)).